The following is a 422-amino-acid chain: Dihydrolipoyllysine-residue succinyltransferase component of 2-oxoglutarate dehydrogenase complex (422 aa).

The Lipoyl-binding domain occupies 1-76; it reads MPEVKVPELA…EVGQAIAIIG (76 aa). K42 carries the N6-lipoyllysine modification. The disordered stretch occupies residues 77 to 185; that stretch reads EGSGNASKEN…SAKEEKKYNQ (109 aa). Composition is skewed to polar residues over residues 80 to 94 and 116 to 130; these read GNASKENSNDNTPQQ and NQANDDNQQRINATP. The region spanning 127–163 is the Peripheral subunit-binding (PSBD) domain; the sequence is NATPSARRYARENGVNLAEVSPKTNDVVRKEDIDKKQ. Over residues 152 to 163 the composition is skewed to basic and acidic residues; the sequence is DVVRKEDIDKKQ. Positions 164–176 are enriched in low complexity; the sequence is QAPASTQTTQQAS. Catalysis depends on residues H393 and D397.

Belongs to the 2-oxoacid dehydrogenase family. As to quaternary structure, forms a 24-polypeptide structural core with octahedral symmetry. Part of the 2-oxoglutarate dehydrogenase (OGDH) complex composed of E1 (2-oxoglutarate dehydrogenase), E2 (dihydrolipoamide succinyltransferase) and E3 (dihydrolipoamide dehydrogenase); the complex contains multiple copies of the three enzymatic components (E1, E2 and E3). (R)-lipoate serves as cofactor.

It catalyses the reaction N(6)-[(R)-dihydrolipoyl]-L-lysyl-[protein] + succinyl-CoA = N(6)-[(R)-S(8)-succinyldihydrolipoyl]-L-lysyl-[protein] + CoA. The protein operates within amino-acid degradation; L-lysine degradation via saccharopine pathway; glutaryl-CoA from L-lysine: step 6/6. E2 component of the 2-oxoglutarate dehydrogenase (OGDH) complex which catalyzes the second step in the conversion of 2-oxoglutarate to succinyl-CoA and CO(2). The sequence is that of Dihydrolipoyllysine-residue succinyltransferase component of 2-oxoglutarate dehydrogenase complex (odhB) from Staphylococcus aureus (strain USA300).